Consider the following 420-residue polypeptide: Serine hydroxymethyltransferase (420 aa).

(6S)-5,6,7,8-tetrahydrofolate-binding positions include Leu123 and 127–129 (GHL). N6-(pyridoxal phosphate)lysine is present on Lys232.

Belongs to the SHMT family. In terms of assembly, homodimer. It depends on pyridoxal 5'-phosphate as a cofactor.

Its subcellular location is the cytoplasm. The enzyme catalyses (6R)-5,10-methylene-5,6,7,8-tetrahydrofolate + glycine + H2O = (6S)-5,6,7,8-tetrahydrofolate + L-serine. The protein operates within one-carbon metabolism; tetrahydrofolate interconversion. Its pathway is amino-acid biosynthesis; glycine biosynthesis; glycine from L-serine: step 1/1. Catalyzes the reversible interconversion of serine and glycine with tetrahydrofolate (THF) serving as the one-carbon carrier. This reaction serves as the major source of one-carbon groups required for the biosynthesis of purines, thymidylate, methionine, and other important biomolecules. Also exhibits THF-independent aldolase activity toward beta-hydroxyamino acids, producing glycine and aldehydes, via a retro-aldol mechanism. The chain is Serine hydroxymethyltransferase from Ehrlichia chaffeensis (strain ATCC CRL-10679 / Arkansas).